A 223-amino-acid polypeptide reads, in one-letter code: Deoxyribose-phosphate aldolase (223 aa).

Asp91 serves as the catalytic Proton donor/acceptor. The Schiff-base intermediate with acetaldehyde role is filled by Lys153. The active-site Proton donor/acceptor is the Lys182.

This sequence belongs to the DeoC/FbaB aldolase family. DeoC type 1 subfamily.

The protein resides in the cytoplasm. It catalyses the reaction 2-deoxy-D-ribose 5-phosphate = D-glyceraldehyde 3-phosphate + acetaldehyde. It participates in carbohydrate degradation; 2-deoxy-D-ribose 1-phosphate degradation; D-glyceraldehyde 3-phosphate and acetaldehyde from 2-deoxy-alpha-D-ribose 1-phosphate: step 2/2. Its function is as follows. Catalyzes a reversible aldol reaction between acetaldehyde and D-glyceraldehyde 3-phosphate to generate 2-deoxy-D-ribose 5-phosphate. This is Deoxyribose-phosphate aldolase from Streptococcus pyogenes serotype M28 (strain MGAS6180).